A 391-amino-acid polypeptide reads, in one-letter code: 1-deoxy-D-xylulose 5-phosphate reductoisomerase (391 aa).

Residues Thr-11, Gly-12, Ser-13, Ile-14, and Asn-126 each coordinate NADPH. Lys-127 contributes to the 1-deoxy-D-xylulose 5-phosphate binding site. NADPH is bound at residue Glu-128. Asp-152 contributes to the Mn(2+) binding site. Ser-153, Glu-154, Ser-176, and His-199 together coordinate 1-deoxy-D-xylulose 5-phosphate. Glu-154 provides a ligand contact to Mn(2+). Gly-205 contacts NADPH. Residues Ser-212, Asn-217, Lys-218, and Glu-221 each contribute to the 1-deoxy-D-xylulose 5-phosphate site. A Mn(2+)-binding site is contributed by Glu-221.

It belongs to the DXR family. Mg(2+) is required as a cofactor. It depends on Mn(2+) as a cofactor.

The catalysed reaction is 2-C-methyl-D-erythritol 4-phosphate + NADP(+) = 1-deoxy-D-xylulose 5-phosphate + NADPH + H(+). Its pathway is isoprenoid biosynthesis; isopentenyl diphosphate biosynthesis via DXP pathway; isopentenyl diphosphate from 1-deoxy-D-xylulose 5-phosphate: step 1/6. In terms of biological role, catalyzes the NADPH-dependent rearrangement and reduction of 1-deoxy-D-xylulose-5-phosphate (DXP) to 2-C-methyl-D-erythritol 4-phosphate (MEP). The chain is 1-deoxy-D-xylulose 5-phosphate reductoisomerase from Acidithiobacillus ferrooxidans (strain ATCC 53993 / BNL-5-31) (Leptospirillum ferrooxidans (ATCC 53993)).